The primary structure comprises 373 residues: 3 beta-hydroxysteroid dehydrogenase/Delta 5--&gt;4-isomerase type 1 (373 aa).

NADP(+) contacts are provided by residues 10-15 (GAGGFL), tyrosine 155, and lysine 159. Catalysis depends on lysine 159, which acts as the Proton donor. A helical transmembrane segment spans residues 288 to 308 (LSLMYWIGFLLEIVSFLLRPI).

The protein belongs to the 3-beta-HSD family. In terms of tissue distribution, placenta and skin. Predominantly expressed in mammary gland tissue.

The protein resides in the endoplasmic reticulum membrane. The protein localises to the mitochondrion membrane. The catalysed reaction is a 3beta-hydroxy-Delta(5)-steroid + NAD(+) = a 3-oxo-Delta(5)-steroid + NADH + H(+). The enzyme catalyses pregnenolone + NAD(+) = pregn-5-ene-3,20-dione + NADH + H(+). It carries out the reaction 3beta-hydroxyandrost-5-en-17-one + NAD(+) = androst-5-ene-3,17-dione + NADH + H(+). It catalyses the reaction androst-5-en-3beta,17beta-diol + NAD(+) = 17beta-hydroxy-androst-5-en-3-one + NADH + H(+). The catalysed reaction is a 3beta-hydroxysteroid + NADP(+) = a 3-oxosteroid + NADPH + H(+). The enzyme catalyses 5alpha-androstane-3beta,17beta-diol + NADP(+) = 17beta-hydroxy-5alpha-androstan-3-one + NADPH + H(+). It carries out the reaction 3beta-hydroxy-5alpha-androstan-17-one + NADP(+) = 5alpha-androstan-3,17-dione + NADPH + H(+). It catalyses the reaction a 3-oxo-Delta(5)-steroid = a 3-oxo-Delta(4)-steroid. The catalysed reaction is pregn-5-ene-3,20-dione = progesterone. The enzyme catalyses androst-5-ene-3,17-dione = androst-4-ene-3,17-dione. It carries out the reaction 17beta-hydroxy-androst-5-en-3-one = testosterone. It catalyses the reaction 5alpha-androstane-3beta,17beta-diol + NAD(+) = 17beta-hydroxy-5alpha-androstan-3-one + NADH + H(+). Its pathway is steroid hormone biosynthesis. It participates in steroid metabolism. Functionally, a bifunctional enzyme responsible for the oxidation and isomerization of 3beta-hydroxy-Delta(5)-steroid precursors to 3-oxo-Delta(4)-steroids, an essential step in steroid hormone biosynthesis. Specifically catalyzes the conversion of pregnenolone to progesterone, 17alpha-hydroxypregnenolone to 17alpha-hydroxyprogesterone, dehydroepiandrosterone (DHEA) to 4-androstenedione, and androstenediol to testosterone. Additionally, catalyzes the interconversion between 3beta-hydroxy and 3-oxo-5alpha-androstane steroids controlling the bioavalability of the active forms. Specifically converts dihydrotestosterone to its inactive form 5alpha-androstanediol, that does not bind androgen receptor/AR. Also converts androstanedione, a precursor of testosterone and estrone, to epiandrosterone. Expected to use NAD(+) as preferred electron donor for the 3beta-hydroxy-steroid dehydrogenase activity and NADPH for the 3-ketosteroid reductase activity. In Homo sapiens (Human), this protein is 3 beta-hydroxysteroid dehydrogenase/Delta 5--&gt;4-isomerase type 1.